The following is a 492-amino-acid chain: 3-octaprenyl-4-hydroxybenzoate carboxy-lyase (492 aa).

A Mn(2+)-binding site is contributed by Asn-177. Residues 180-182, 194-196, and 199-200 each bind prenylated FMN; these read IYR, RWL, and RG. Glu-243 contributes to the Mn(2+) binding site. The active-site Proton donor is Asp-292.

Belongs to the UbiD family. As to quaternary structure, homohexamer. Requires prenylated FMN as cofactor. It depends on Mn(2+) as a cofactor.

The protein localises to the cell membrane. It catalyses the reaction a 4-hydroxy-3-(all-trans-polyprenyl)benzoate + H(+) = a 2-(all-trans-polyprenyl)phenol + CO2. It participates in cofactor biosynthesis; ubiquinone biosynthesis. Catalyzes the decarboxylation of 3-octaprenyl-4-hydroxy benzoate to 2-octaprenylphenol, an intermediate step in ubiquinone biosynthesis. This Neisseria meningitidis serogroup B (strain ATCC BAA-335 / MC58) protein is 3-octaprenyl-4-hydroxybenzoate carboxy-lyase.